The chain runs to 309 residues: Taste receptor type 2 member 31 (309 aa).

Residues 1–2 are Extracellular-facing; it reads MT. The chain crosses the membrane as a helical span at residues 3 to 23; the sequence is TFLPIIFSSLVVVIFVIGNFA. Residues 24–55 are Cytoplasmic-facing; the sequence is NGFIALVNSIEWFKXQKISFADQILTALAVSR. A helical membrane pass occupies residues 56 to 76; that stretch reads VGLLWVLLLNWYSTVLNPAFY. At 77 to 100 the chain is on the extracellular side; the sequence is SVEVRTTAYNVWAVTGHFSNWLAT. Residues 101 to 121 form a helical membrane-spanning segment; it reads SLSIFYLLKIANFSNFIFLHL. Over 122–126 the chain is Cytoplasmic; that stretch reads KRRVK. The helical transmembrane segment at 127–147 threads the bilayer; that stretch reads SVILVMLLGPLLFLACQLFMI. At 148–181 the chain is on the extracellular side; that stretch reads NMKEIVRTKEYEGNMTWKIKLRSAVYLSDATVTT. Residue Asn161 is glycosylated (N-linked (GlcNAc...) asparagine). A helical transmembrane segment spans residues 182–202; it reads LGNLVPFTLTLLCFLLLICSL. Over 203-229 the chain is Cytoplasmic; sequence CKHLKKMQLHGKGSQDPSTKVHIKVLQ. Residues 230–250 form a helical membrane-spanning segment; that stretch reads TVISFLLLCAIYFLSIMISVW. Residues 251-259 are Extracellular-facing; that stretch reads SFGSLKNKP. Residues 260–280 traverse the membrane as a helical segment; the sequence is VFMFCKAIRFSYPSIHPFILI. At 281 to 309 the chain is on the cytoplasmic side; it reads WGNKKLKQTFLSVLRQVRYWVKGEKPSSP.

Belongs to the G-protein coupled receptor T2R family.

It localises to the membrane. In terms of biological role, receptor that may play a role in the perception of bitterness and is gustducin-linked. May play a role in sensing the chemical composition of the gastrointestinal content. The activity of this receptor may stimulate alpha gustducin, mediate PLC-beta-2 activation and lead to the gating of TRPM5. The polypeptide is Taste receptor type 2 member 31 (TAS2R31) (Pan paniscus (Pygmy chimpanzee)).